The chain runs to 292 residues: AhcY transcriptional activator HvrB (292 aa).

Residues 10–67 (PPLTALRAFAATASEGGFSAAARKLNVTHAAIAQQVRALEADLDVPLVWRDGKHLHLT) form the HTH lysR-type domain. A DNA-binding region (H-T-H motif) is located at residues 27–46 (FSAAARKLNVTHAAIAQQVR).

It belongs to the LysR transcriptional regulatory family.

Functionally, functions as a low-light activator of ahcY expression (gene for S-adenosyl-L-homocysteine hydrolase) and as a high-light activator of an uncharacterized 21.6 kDa protein in the ahcY-hvrB intergenic region (orf5). It is also a negative regulator of its own expression. The polypeptide is AhcY transcriptional activator HvrB (hvrB) (Rhodobacter capsulatus (strain ATCC BAA-309 / NBRC 16581 / SB1003)).